Reading from the N-terminus, the 293-residue chain is MAAITASMVAELRAKTDAPMMECKKALTEADGDLAKAEELLRVKLGNKASKAASRVTAEGVVASFVGGNAGALVELNCETDFVAKNDDFLAFSKTVAELVATQNPADVAALSALPLDGSTVDAVRLALIGKIGENVSIRRFVRFETANKIATYLHGARIGVIVEYTGAEEQVGKDVAMHIAAMKPVALSAADVPAELIDTERRVAEQKAAESGKPAEIVAKMVDGSVQKYLKEVSLLNQTFVKNDKQTIEQMLKAADAAVQKFALFVVGEGIEKRQDDFAAEVAAQVAAAKQQ.

Residues Thr80 to Val83 are involved in Mg(2+) ion dislocation from EF-Tu.

Belongs to the EF-Ts family.

Its subcellular location is the cytoplasm. In terms of biological role, associates with the EF-Tu.GDP complex and induces the exchange of GDP to GTP. It remains bound to the aminoacyl-tRNA.EF-Tu.GTP complex up to the GTP hydrolysis stage on the ribosome. The sequence is that of Elongation factor Ts from Burkholderia vietnamiensis (strain G4 / LMG 22486) (Burkholderia cepacia (strain R1808)).